A 54-amino-acid chain; its full sequence is ATP synthase F(0) complex subunit 8 (54 aa).

The helical transmembrane segment at 8-24 threads the bilayer; sequence PWFSIMLLTWFTFSLLI.

It belongs to the ATPase protein 8 family. Component of the ATP synthase complex composed at least of ATP5F1A/subunit alpha, ATP5F1B/subunit beta, ATP5MC1/subunit c (homooctomer), MT-ATP6/subunit a, MT-ATP8/subunit 8, ATP5ME/subunit e, ATP5MF/subunit f, ATP5MG/subunit g, ATP5MK/subunit k, ATP5MJ/subunit j, ATP5F1C/subunit gamma, ATP5F1D/subunit delta, ATP5F1E/subunit epsilon, ATP5PF/subunit F6, ATP5PB/subunit b, ATP5PD/subunit d, ATP5PO/subunit OSCP. ATP synthase complex consists of a soluble F(1) head domain (subunits alpha(3) and beta(3)) - the catalytic core - and a membrane F(0) domain - the membrane proton channel (subunits c, a, 8, e, f, g, k and j). These two domains are linked by a central stalk (subunits gamma, delta, and epsilon) rotating inside the F1 region and a stationary peripheral stalk (subunits F6, b, d, and OSCP).

The protein resides in the mitochondrion membrane. Its function is as follows. Subunit 8, of the mitochondrial membrane ATP synthase complex (F(1)F(0) ATP synthase or Complex V) that produces ATP from ADP in the presence of a proton gradient across the membrane which is generated by electron transport complexes of the respiratory chain. ATP synthase complex consist of a soluble F(1) head domain - the catalytic core - and a membrane F(1) domain - the membrane proton channel. These two domains are linked by a central stalk rotating inside the F(1) region and a stationary peripheral stalk. During catalysis, ATP synthesis in the catalytic domain of F(1) is coupled via a rotary mechanism of the central stalk subunits to proton translocation. In vivo, can only synthesize ATP although its ATP hydrolase activity can be activated artificially in vitro. Part of the complex F(0) domain. In Gallus gallus (Chicken), this protein is ATP synthase F(0) complex subunit 8.